Here is a 279-residue protein sequence, read N- to C-terminus: Putative pyruvate, phosphate dikinase regulatory protein (279 aa).

153-160 (GVSRTSKT) is a binding site for ADP.

It belongs to the pyruvate, phosphate/water dikinase regulatory protein family. PDRP subfamily.

The enzyme catalyses N(tele)-phospho-L-histidyl/L-threonyl-[pyruvate, phosphate dikinase] + ADP = N(tele)-phospho-L-histidyl/O-phospho-L-threonyl-[pyruvate, phosphate dikinase] + AMP + H(+). It carries out the reaction N(tele)-phospho-L-histidyl/O-phospho-L-threonyl-[pyruvate, phosphate dikinase] + phosphate + H(+) = N(tele)-phospho-L-histidyl/L-threonyl-[pyruvate, phosphate dikinase] + diphosphate. Its function is as follows. Bifunctional serine/threonine kinase and phosphorylase involved in the regulation of the pyruvate, phosphate dikinase (PPDK) by catalyzing its phosphorylation/dephosphorylation. This Rhodopseudomonas palustris (strain BisB5) protein is Putative pyruvate, phosphate dikinase regulatory protein.